The following is an 81-amino-acid chain: Large ribosomal subunit protein bL31B (81 aa).

Belongs to the bacterial ribosomal protein bL31 family. Type B subfamily. As to quaternary structure, part of the 50S ribosomal subunit.

This is Large ribosomal subunit protein bL31B from Bacillus anthracis (strain A0248).